A 391-amino-acid polypeptide reads, in one-letter code: G-patch domain-containing protein 1 (391 aa).

In terms of domain architecture, G-patch spans 15-61; it reads KDSAAFKLMKSMGWEEGEGLGKDKQGIKGYVRVTNKQDTSGVGLDKP. Disordered stretches follow at residues 80–132 and 212–307; these read VQAA…EKGK and KASE…PAKR. 2 stretches are compositionally biased toward acidic residues: residues 92–102 and 265–295; these read DDSDKEDESED and NSDD…DDDK. Positions 305–312 match the Nuclear localization signal motif; that stretch reads AKRKHDEI.

In terms of tissue distribution, strongly expressed in tissues with high cell proliferation activity that have a high demand for ribosome production such as shoot tips, leaves primordia, root tips and floral buds.

It localises to the nucleus. It is found in the nucleolus. Its function is as follows. Involved in ribosome biogenesis, required for normal progression of rRNA processing. Seems to promote cell proliferation in leaves. In Arabidopsis thaliana (Mouse-ear cress), this protein is G-patch domain-containing protein 1.